Here is a 515-residue protein sequence, read N- to C-terminus: Recombining binding protein suppressor of hairless-like protein (515 aa).

The tract at residues 1–40 is disordered; it reads MDPRETTDPSLPPGPLTHLSLPDSSEVRLQSDGPSLLGSW. DNA-binding regions lie at residues 76–86, 191–196, and 218–223; these read QKSYGNEKRFF, SKPSQK, and RLRSQT. The region spanning 384–474 is the IPT/TIG domain; that stretch reads PLISTLELSG…YPSPFSFTYT (91 aa).

This sequence belongs to the Su(H) family. In terms of assembly, interacts weakly with EBNA2. Does not interact with any Notch proteins. Highly expressed in lung. Also detected in spleen, and brain.

The protein resides in the nucleus. Functionally, putative transcription factor, which cooperates with EBNA2 to activate transcription. In Mus musculus (Mouse), this protein is Recombining binding protein suppressor of hairless-like protein (Rbpjl).